We begin with the raw amino-acid sequence, 264 residues long: Glutamate racemase (264 aa).

Substrate is bound by residues aspartate 10–serine 11 and tyrosine 42–glycine 43. The Proton donor/acceptor role is filled by cysteine 73. Asparagine 74 to threonine 75 lines the substrate pocket. The Proton donor/acceptor role is filled by cysteine 183. Threonine 184–histidine 185 serves as a coordination point for substrate.

The protein belongs to the aspartate/glutamate racemases family.

The catalysed reaction is L-glutamate = D-glutamate. Its pathway is cell wall biogenesis; peptidoglycan biosynthesis. Its function is as follows. Provides the (R)-glutamate required for cell wall biosynthesis. The sequence is that of Glutamate racemase from Streptococcus sanguinis (strain SK36).